Consider the following 107-residue polypeptide: Cell cycle protein GpsB (107 aa).

Residues 32 to 65 (LDNVIQDYETYISEIEELKAEIERLKNQNTHPKS) adopt a coiled-coil conformation. Residues 57–80 (KNQNTHPKSPSTENRHAMVQPTRV) are disordered. Over residues 58-68 (NQNTHPKSPST) the composition is skewed to polar residues.

It belongs to the GpsB family. Forms polymers through the coiled coil domains. Interacts with PBP1, MreC and EzrA.

It localises to the cytoplasm. Divisome component that associates with the complex late in its assembly, after the Z-ring is formed, and is dependent on DivIC and PBP2B for its recruitment to the divisome. Together with EzrA, is a key component of the system that regulates PBP1 localization during cell cycle progression. Its main role could be the removal of PBP1 from the cell pole after pole maturation is completed. Also contributes to the recruitment of PBP1 to the division complex. Not essential for septum formation. The polypeptide is Cell cycle protein GpsB (Streptococcus uberis (strain ATCC BAA-854 / 0140J)).